A 143-amino-acid polypeptide reads, in one-letter code: Ribosomal RNA large subunit methyltransferase H (143 aa).

S-adenosyl-L-methionine is bound by residues Leu68 and Gly95.

It belongs to the RNA methyltransferase RlmH family. In terms of assembly, homodimer.

It localises to the cytoplasm. It carries out the reaction pseudouridine(1915) in 23S rRNA + S-adenosyl-L-methionine = N(3)-methylpseudouridine(1915) in 23S rRNA + S-adenosyl-L-homocysteine + H(+). Its function is as follows. Specifically methylates the pseudouridine at position 1915 (m3Psi1915) in 23S rRNA. The protein is Ribosomal RNA large subunit methyltransferase H of Mycoplasma mobile (strain ATCC 43663 / 163K / NCTC 11711) (Mesomycoplasma mobile).